The chain runs to 313 residues: Olfactory receptor 4M1 (313 aa).

At 1–25 the chain is on the extracellular side; the sequence is MEPANDTTVTEFILTGLSQTREVQL. Asn5 is a glycosylation site (N-linked (GlcNAc...) asparagine). The chain crosses the membrane as a helical span at residues 26 to 46; that stretch reads VLFVIFLSFYLFILPVNILII. Over 47 to 57 the chain is Cytoplasmic; sequence CTIRLDSHLSS. The chain crosses the membrane as a helical span at residues 58 to 78; it reads PMYFLLANLAFLDIWYSSITA. Topologically, residues 79 to 97 are extracellular; the sequence is PKMLVDFFVERKIISFGGC. Cys97 and Cys179 are joined by a disulfide. Residues 98-118 traverse the membrane as a helical segment; sequence IAQLFFLHFVGASEMFLLTVM. Residues 119 to 142 are Cytoplasmic-facing; the sequence is AFDRYAAICRPLHYATIMNRRLCC. Residues 143–163 traverse the membrane as a helical segment; the sequence is ILVALSWTGGFVHSIIQVALI. At 164–204 the chain is on the extracellular side; it reads VRLPFCGPNELDNYFCDITQVVRIACANTFLEEMVMIFSSG. The helical transmembrane segment at 205 to 225 threads the bilayer; it reads LISVVCFIALLMSYAFLLTML. Over 226-238 the chain is Cytoplasmic; the sequence is KKHSSSGESTSRA. Residues 239 to 259 form a helical membrane-spanning segment; that stretch reads ISTCYSHITIVVLMFGPSIYI. At 260-270 the chain is on the extracellular side; the sequence is YARPFDSFSLD. Residues 271 to 291 traverse the membrane as a helical segment; it reads KVVSVFHTVIFPLLNPIIYTL. Residues 292–313 lie on the Cytoplasmic side of the membrane; sequence RNKEVKAAMRKLVNRYIFCKEK.

The protein belongs to the G-protein coupled receptor 1 family. Highly expressed in liver but not in adipose tissue. Also expressed at high level in testis.

The protein resides in the cell membrane. In terms of biological role, olfactory receptor that acts as a receptor of Asprosin hormone at the surface of hepatocytes to promote hepatocyte glucose release. Also binds Asprosin in the arcuate nucleus of the hypothalamus, thereby stimulating appetite by promoting orexigenic AgRP neuronal activity. In testis, Asprosin-binding promotes sperm progressive motility and enhances male fertility. The activity of this receptor is mediated by G proteins which activate adenylyl cyclase, resulting in an elevation of intracellular cAMP. This Mus musculus (Mouse) protein is Olfactory receptor 4M1.